A 518-amino-acid polypeptide reads, in one-letter code: MAPIFRNYRFAIGAFAVIMLILLIKTSSIGPPSIARTVTPNASIPKTPEDISILPVNDEPGYLQDSKTEQNYPELADAVKSQTSQTCSEEHKYVIMIDAGSTGSRVHIYKFDVCTSPPTLLDEKFDMLEPGLSSFDTDSVGAANSLDPLLKVAMNYVPIKARSCTPVAVKATAGLRLLGDAKSSKILSAVRDHLEKDYPFPVVEGDGVSIMGGDEEGVFAWITTNYLLGNIGANGPKLPTAAVFDLGGGSTQIVFEPTFPINEKMVDGEHKFDLKFGDENYTLYQFSHLGYGLKEGRNKVNSVLVENALKDGKILKGDNTKTHQLSSPCLPPKVNATNEKVTLESKETYTIDFIGPDEPSGAQCRFLTDEILNKDAQCQSPPCSFNGVHQPSLVRTFKESNDIYIFSYFYDRTRPLGMPLSFTLNELNDLARIVCKGEETWNSVFSGIAGSLDELESDSHFCLDLSFQVSLLHTGYDIPLQRELRTGKKIANKEIGWCLGASLPLLKADNWKCKIQSA.

The Cytoplasmic portion of the chain corresponds to 1–9; that stretch reads MAPIFRNYR. Residues 10–24 traverse the membrane as a helical; Signal-anchor for type II membrane protein segment; sequence FAIGAFAVIMLILLI. The Lumenal segment spans residues 25-518; it reads KTSSIGPPSI…DNWKCKIQSA (494 aa). A glycan (N-linked (GlcNAc...) asparagine) is linked at asparagine 41. The active-site Proton acceptor is glutamate 216. 2 N-linked (GlcNAc...) asparagine glycosylation sites follow: asparagine 280 and asparagine 335.

It belongs to the GDA1/CD39 NTPase family. As to quaternary structure, homodimer.

It is found in the golgi apparatus membrane. It catalyses the reaction GDP + H2O = GMP + phosphate + H(+). It participates in protein modification; protein glycosylation. After transfer of sugars to endogenous macromolecular acceptors, the enzyme converts nucleoside diphosphates to nucleoside monophosphates which in turn exit the Golgi lumen in a coupled antiporter reaction, allowing entry of additional nucleotide sugar from the cytosol. In Saccharomyces cerevisiae (strain ATCC 204508 / S288c) (Baker's yeast), this protein is Guanosine-diphosphatase (GDA1).